The primary structure comprises 396 residues: Ribosomal RNA large subunit methyltransferase I (396 aa).

One can recognise a PUA domain in the interval 2-81 (SVRLVLAKGR…ESIDIAFFTR (80 aa)).

It belongs to the methyltransferase superfamily. RlmI family.

It is found in the cytoplasm. The enzyme catalyses cytidine(1962) in 23S rRNA + S-adenosyl-L-methionine = 5-methylcytidine(1962) in 23S rRNA + S-adenosyl-L-homocysteine + H(+). Functionally, specifically methylates the cytosine at position 1962 (m5C1962) of 23S rRNA. The protein is Ribosomal RNA large subunit methyltransferase I of Escherichia coli (strain UTI89 / UPEC).